We begin with the raw amino-acid sequence, 82 residues long: uncharacterized protein (82 aa).

The disordered stretch occupies residues 60–82 (YKRRRPDHMMKRNSPSYTGDHKT).

This is an uncharacterized protein from Saccharomyces cerevisiae (strain ATCC 204508 / S288c) (Baker's yeast).